We begin with the raw amino-acid sequence, 148 residues long: Puroindoline-B (148 aa).

The first 19 residues, 1-19 (MKTLFLLALLALVASTTFA), serve as a signal peptide directing secretion. Residues 20–29 (QYSEVGGWYN) constitute a propeptide that is removed on maturation.

Five disulfide bonds are present. In terms of tissue distribution, endosperm and aleurone layer of developing kernels. In the aleurone layer, mainly localized to starch granules and the surface of the plasma membrane, forming a uniform layer, also abundant in the intercellular space. In the endosperm, mainly localized to starch granules and the plasma membrane, but less abundant in the intercellular space. Not found in roots or coleoptiles.

The protein resides in the membrane. Its subcellular location is the secreted. The protein localises to the extracellular space. Acts as a membranotoxin, probably through its antibacterial and antifungal activities, contributing to the defense mechanism of the plant against predators. Forms monovalent cation-selective ion channels in membranes. Has antibacterial activity against the Gram-positive bacteria S.aureus and C.michiganensis, and the Gram-negative bacteria E.coli, P.syringae pv phaseoli, A.tumefaciens and E.carotovora subsp carotovora. Acts synergistically with PINA against bacteria. Contributes to grain texture and hardness. This chain is Puroindoline-B (PINB), found in Triticum aestivum (Wheat).